We begin with the raw amino-acid sequence, 416 residues long: Peptide chain release factor subunit 1 (416 aa).

This sequence belongs to the eukaryotic release factor 1 family. Heterodimer of two subunits, one of which binds GTP.

It localises to the cytoplasm. Its function is as follows. Directs the termination of nascent peptide synthesis (translation) in response to the termination codons UAA, UAG and UGA. This Haloquadratum walsbyi (strain DSM 16790 / HBSQ001) protein is Peptide chain release factor subunit 1.